The following is a 325-amino-acid chain: Melanocortin receptor 5 (325 aa).

The Extracellular segment spans residues 1–37; sequence MNSSFHLHFLDLNLNATEGNLSGPNVKNKSSPCEDMG. 4 N-linked (GlcNAc...) asparagine glycosylation sites follow: Asn-2, Asn-15, Asn-20, and Asn-28. The chain crosses the membrane as a helical span at residues 38–61; it reads IAVEVFLTLGVISLLENILVIGAI. Residues 62–73 lie on the Cytoplasmic side of the membrane; it reads VKNKNLHSPMYF. A helical membrane pass occupies residues 74 to 97; the sequence is FVCSLAVADMLVSMSSAWETITIY. Over 98–114 the chain is Extracellular; it reads LLNNKHLVIADAFVRHI. The chain crosses the membrane as a helical span at residues 115–138; it reads DNVFDSMICISVVASMCSLLAIAV. Topologically, residues 139–155 are cytoplasmic; the sequence is DRYVTIFYALRYHHIMT. Residues 156–179 traverse the membrane as a helical segment; it reads ARRSGAIIAGIWAFCTGCGIVFIL. The Extracellular portion of the chain corresponds to 180 to 186; sequence YSESTYV. The helical transmembrane segment at 187-211 threads the bilayer; sequence ILCLISMFFAMLFLLVSLYIHMFLL. Residues 212-239 lie on the Cytoplasmic side of the membrane; sequence ARTHVKRIAALPGASSARQRTSMQGAVT. The chain crosses the membrane as a helical span at residues 240–265; sequence VTMLLGVFTVCWAPFFLHLTLMLSCP. Residues 266 to 273 are Extracellular-facing; it reads QNLYCSRF. The chain crosses the membrane as a helical span at residues 274 to 297; sequence MSHFNMYLILIMCNSVMDPLIYAF. The Cytoplasmic segment spans residues 298–325; it reads RSQEMRKTFKEIICCRGFRIACSFPRRD. S-palmitoyl cysteine attachment occurs at residues Cys-311 and Cys-312.

This sequence belongs to the G-protein coupled receptor 1 family. Expressed in the brain but not in the melanoma cells.

The protein resides in the cell membrane. Its function is as follows. Receptor for MSH (alpha, beta and gamma) and ACTH. The activity of this receptor is mediated by G proteins which activate adenylate cyclase. This receptor is a possible mediator of the immunomodulation properties of melanocortins. This Homo sapiens (Human) protein is Melanocortin receptor 5 (MC5R).